Consider the following 428-residue polypeptide: UPF0053 inner membrane protein YfjD (428 aa).

Residues 1-3 are Cytoplasmic-facing; sequence MEH. A CNNM transmembrane domain is found at 2–192; that stretch reads EHISTTTLII…SQISRRNQDM (191 aa). Residues 4-24 traverse the membrane as a helical segment; that stretch reads ISTTTLIIILIIMVVISAYFS. At 25–64 the chain is on the periplasmic side; sequence GSETGMMTLNRYRLRHMAKQGNRSAKRVEKLLRKPDRLIS. Residues 65-85 traverse the membrane as a helical segment; sequence LVLIGNNLVNILASALGTIVG. Residues 86–91 lie on the Cytoplasmic side of the membrane; the sequence is MRLYGD. Residues 92–112 traverse the membrane as a helical segment; that stretch reads AGVAIATGVLTFVVLVFAEVL. Topologically, residues 113 to 129 are periplasmic; the sequence is PKTIAALYPEKVAYPSS. The chain crosses the membrane as a helical span at residues 130–150; it reads FLLAPLQILMMPLVWLLNAIT. The Cytoplasmic segment spans residues 151-428; the sequence is RMLMRMMGIK…VKPLRESVAE (278 aa). CBS domains are found at residues 208-270 and 272-332; these read MVPR…FTKE and MLRA…FTTS.

Belongs to the UPF0053 family.

The protein resides in the cell inner membrane. The protein is UPF0053 inner membrane protein YfjD (yfjD) of Escherichia coli (strain K12).